The following is an 861-amino-acid chain: ATP-dependent helicase rhp16 (861 aa).

A compositionally biased stretch (polar residues) spans 1–13; it reads MGTSCNKINSNSN. The interval 1 to 217 is disordered; it reads MGTSCNKINS…KSIPSHERTH (217 aa). Composition is skewed to basic and acidic residues over residues 14 to 23 and 38 to 57; these read KGKENMHFVL and VERD…KEFE. Residues 60–82 show a composition bias toward polar residues; that stretch reads LSTNKKLIIQSNNTSSQHSTPPL. The segment covering 83-95 has biased composition (low complexity); that stretch reads SISDTSTHTGSST. Over residues 96 to 106 the composition is skewed to polar residues; sequence DNVEANPNTGF. The span at 109–123 shows a compositional bias: basic residues; it reads ARKRSLRSSNLKKKF. The segment covering 131–145 has biased composition (acidic residues); that stretch reads ESNESEFIDDDESDE. Low complexity predominate over residues 193–204; it reads ARASSSASSSSR. Residues 268 to 442 form the Helicase ATP-binding domain; sequence RQEDSSFGGG…FSLLRFLRAD (175 aa). 281-288 provides a ligand contact to ATP; that stretch reads DEMGMGKT. Positions 393 to 396 match the DEAH box motif; the sequence is DEAH. Residues 609 to 652 form an RING-type zinc finger; the sequence is CKICDEVAQDAIESRCHHTFCRLCVTEYINAAGDGENVNCPSCF. The Helicase C-terminal domain occupies 695 to 848; sequence LVEELYLLRK…TIDQDEKALN (154 aa).

It belongs to the SNF2/RAD54 helicase family.

The protein resides in the nucleus. In terms of biological role, involved in global genome repair (GGR) via nucleotide excision repair (NER), in conjunction with rhp7, after UV irradiation. This Schizosaccharomyces pombe (strain 972 / ATCC 24843) (Fission yeast) protein is ATP-dependent helicase rhp16 (rhp16).